The sequence spans 1065 residues: Valine--tRNA ligase, mitochondrial (1065 aa).

The N-terminal 15 residues, 1-15, are a transit peptide targeting the mitochondrion; the sequence is MPHLPLASFRPPLWG. Residues 27-52 are disordered; that stretch reads ALCTQPEPHGSPVSRRNREAKQKRLR. The span at 42-52 shows a compositional bias: basic and acidic residues; the sequence is RNREAKQKRLR. Residues 146-156 carry the 'HIGH' region motif; that stretch reads PNVTGSLHIGH. The short motif at 659-663 is the 'KMSKS' region element; the sequence is KMSKS. Lysine 662 contacts ATP.

The protein belongs to the class-I aminoacyl-tRNA synthetase family.

It is found in the mitochondrion. It catalyses the reaction tRNA(Val) + L-valine + ATP = L-valyl-tRNA(Val) + AMP + diphosphate. Functionally, catalyzes the attachment of valine to tRNA(Val) in a two-step reaction: valine is first activated by ATP to form Val-AMP and then transferred to the acceptor end of tRNA(Val). This Rattus norvegicus (Rat) protein is Valine--tRNA ligase, mitochondrial (Vars2).